A 314-amino-acid polypeptide reads, in one-letter code: 3'-5' exoribonuclease YhaM (314 aa).

Positions 14–90 (VDLYLLIKSS…QLKLRNIRPA (77 aa)) form a DNA-binding region, OB. Residues 163–279 (HVVSMLNLAK…LHYIDNLDAK (117 aa)) form the HD domain.

Belongs to the YhaM family.

Functionally, shows a 3'-5' exoribonuclease activity. The sequence is that of 3'-5' exoribonuclease YhaM from Bacillus licheniformis (strain ATCC 14580 / DSM 13 / JCM 2505 / CCUG 7422 / NBRC 12200 / NCIMB 9375 / NCTC 10341 / NRRL NRS-1264 / Gibson 46).